The sequence spans 343 residues: UDP-3-O-acylglucosamine N-acyltransferase (343 aa).

The active-site Proton acceptor is His-237.

Belongs to the transferase hexapeptide repeat family. LpxD subfamily. In terms of assembly, homotrimer.

It carries out the reaction a UDP-3-O-[(3R)-3-hydroxyacyl]-alpha-D-glucosamine + a (3R)-hydroxyacyl-[ACP] = a UDP-2-N,3-O-bis[(3R)-3-hydroxyacyl]-alpha-D-glucosamine + holo-[ACP] + H(+). It functions in the pathway bacterial outer membrane biogenesis; LPS lipid A biosynthesis. Functionally, catalyzes the N-acylation of UDP-3-O-acylglucosamine using 3-hydroxyacyl-ACP as the acyl donor. Is involved in the biosynthesis of lipid A, a phosphorylated glycolipid that anchors the lipopolysaccharide to the outer membrane of the cell. The polypeptide is UDP-3-O-acylglucosamine N-acyltransferase (Synechococcus sp. (strain JA-3-3Ab) (Cyanobacteria bacterium Yellowstone A-Prime)).